The following is a 630-amino-acid chain: ATP-dependent RNA helicase mrh4, mitochondrial (630 aa).

The transit peptide at methionine 1–arginine 46 directs the protein to the mitochondrion. The disordered stretch occupies residues arginine 46 to asparagine 108. Positions aspartate 167–glutamine 174 match the Q motif motif. The 213-residue stretch at aspartate 195–leucine 407 folds into the Helicase ATP-binding domain. Alanine 208 to threonine 215 serves as a coordination point for ATP. Basic and acidic residues predominate over residues glutamate 235–glutamine 255. The tract at residues glutamate 235–proline 265 is disordered. The DEAD box signature appears at aspartate 354 to aspartate 357. The Helicase C-terminal domain maps to glycine 452–serine 630.

It belongs to the DEAD box helicase family. MRH4 subfamily.

Its subcellular location is the mitochondrion. The catalysed reaction is ATP + H2O = ADP + phosphate + H(+). ATP-binding RNA helicase involved in mitochondrial RNA metabolism. Required for maintenance of mitochondrial DNA. The protein is ATP-dependent RNA helicase mrh4, mitochondrial (mrh4) of Emericella nidulans (strain FGSC A4 / ATCC 38163 / CBS 112.46 / NRRL 194 / M139) (Aspergillus nidulans).